A 93-amino-acid polypeptide reads, in one-letter code: MADITDIKTIIYTEKTLGLQEQGVVVIQTSPKVTKNGLKEVLKEYFGVTPLRINSLRITGKVKRFRGKVGQRDEIKKFYVKLPEGVSLENTEA.

This sequence belongs to the universal ribosomal protein uL23 family. Part of the 50S ribosomal subunit. Contacts protein L29, and trigger factor when it is bound to the ribosome.

One of the early assembly proteins it binds 23S rRNA. One of the proteins that surrounds the polypeptide exit tunnel on the outside of the ribosome. Forms the main docking site for trigger factor binding to the ribosome. In Campylobacter curvus (strain 525.92), this protein is Large ribosomal subunit protein uL23.